The chain runs to 165 residues: Lipoprotein signal peptidase (165 aa).

3 helical membrane passes run Trp-12–Gln-32, Trp-70–Ala-90, and Ala-102–Val-122. Catalysis depends on residues Asp-123 and Asp-141. The helical transmembrane segment at Phe-137–Leu-157 threads the bilayer.

This sequence belongs to the peptidase A8 family.

The protein localises to the cell inner membrane. The catalysed reaction is Release of signal peptides from bacterial membrane prolipoproteins. Hydrolyzes -Xaa-Yaa-Zaa-|-(S,diacylglyceryl)Cys-, in which Xaa is hydrophobic (preferably Leu), and Yaa (Ala or Ser) and Zaa (Gly or Ala) have small, neutral side chains.. It participates in protein modification; lipoprotein biosynthesis (signal peptide cleavage). This protein specifically catalyzes the removal of signal peptides from prolipoproteins. The chain is Lipoprotein signal peptidase from Cronobacter sakazakii (strain ATCC BAA-894) (Enterobacter sakazakii).